Reading from the N-terminus, the 331-residue chain is Flotillin-like protein FloA (331 aa).

2 consecutive transmembrane segments (helical) span residues 6–26 (LMILAIVAVAIIVLAVFFTFV) and 28–48 (VMLWISALAAGVKISIFTLVG). The tract at residues 236 to 331 (QTDQAEADKN…KDPSDEDRKS (96 aa)) is required for correct localization. 4 short sequence motifs (EA repeat) span residues 240–242 (AEA), 251–253 (AEE), 278–282 (EAEAE), and 288–290 (AEA). Residues 312-331 (EMRDSFGKLTKDPSDEDRKS) form a disordered region.

It belongs to the flotillin-like FloA family. In terms of assembly, homooligomerizes. Interacts with FloT. Interacts with FtsH midcell. Interacts with PhoR, colocalizes with PhoR in FloA-only membrane rafts.

It is found in the cell membrane. Its subcellular location is the membrane raft. Found in functional membrane microdomains (FMM) that may be equivalent to eukaryotic membrane rafts. FMMs are highly dynamic and increase in number as cells age. FloA and FloT function is partially redundant; double deletions have marked synthetic phenotypes. Flotillins are thought to be important factors in membrane fluidity, especially during periods of rapid growth in rich media. Whether specific proteins are associated with FMMs is controversial; in one study FloT rafts have been shown to include proteins involved in adaptation to stationary phase, while FloA-FloT rafts include proteins involved in differentiation including sporulation, biofilm formation and DNA uptake competence. Another (more finely resolved) study only showed association of NfeD2 with FloT rafts of all the proteins examined. Involved in spatial organization of membranes, perhaps recruiting proteins to specific membrane regions. Simultaneous overexpression of both FloA and FloT leads to defects in cell division and differentiation, in part caused by stabilization of FtsH and its subsequent increased ability to degrade proteins. Cells make more biofilm, are about half as long, have less EzrA and more frequent Z-rings. This chain is Flotillin-like protein FloA, found in Bacillus subtilis (strain 168).